Here is an 89-residue protein sequence, read N- to C-terminus: Small ribosomal subunit protein uS19 (89 aa).

It belongs to the universal ribosomal protein uS19 family.

Functionally, protein S19 forms a complex with S13 that binds strongly to the 16S ribosomal RNA. In Parabacteroides distasonis (strain ATCC 8503 / DSM 20701 / CIP 104284 / JCM 5825 / NCTC 11152), this protein is Small ribosomal subunit protein uS19.